The primary structure comprises 1226 residues: Cytosolic carboxypeptidase 1 (1226 aa).

The tract at residues 599–619 is disordered; that stretch reads TEDDEDTESNSSVEQASVEVP. One can recognise a Peptidase M14 domain in the interval 848-1138; the sequence is YPYTYSTLQM…KFCVGLLRLK (291 aa). Zn(2+) is bound by residues histidine 920, glutamate 923, and histidine 1017. Catalysis depends on glutamate 1102, which acts as the Proton donor/acceptor. At serine 1168 the chain carries Phosphoserine. A disordered region spans residues 1206–1226; that stretch reads YEPSAQEEVLSDSELSRTYLP.

This sequence belongs to the peptidase M14 family. Interacts with MYLK. Zn(2+) serves as cofactor.

The protein localises to the cytoplasm. It is found in the cytosol. It localises to the nucleus. The protein resides in the mitochondrion. The enzyme catalyses (L-glutamyl)(n+1)-gamma-L-glutamyl-L-glutamyl-[protein] + H2O = (L-glutamyl)(n)-gamma-L-glutamyl-L-glutamyl-[protein] + L-glutamate. The catalysed reaction is C-terminal L-alpha-aminoacyl-L-glutamyl-L-glutamyl-[tubulin] + H2O = C-terminal L-alpha-aminoacyl-L-glutamyl-[tubulin] + L-glutamate. Functionally, metallocarboxypeptidase that mediates protein deglutamylation of tubulin and non-tubulin target proteins. Catalyzes the removal of polyglutamate side chains present on the gamma-carboxyl group of glutamate residues within the C-terminal tail of alpha- and beta-tubulin. Specifically cleaves tubulin long-side-chains, while it is not able to remove the branching point glutamate. Also catalyzes the removal of polyglutamate residues from the carboxy-terminus of alpha-tubulin as well as non-tubulin proteins such as MYLK. Involved in KLF4 deglutamylation which promotes KLF4 proteasome-mediated degradation, thereby negatively regulating cell pluripotency maintenance and embryogenesis. This is Cytosolic carboxypeptidase 1 from Homo sapiens (Human).